The primary structure comprises 299 residues: ATP phosphoribosyltransferase (299 aa).

It belongs to the ATP phosphoribosyltransferase family. Long subfamily. Equilibrium between an active dimeric form, an inactive hexameric form and higher aggregates. Interconversion between the various forms is largely reversible and is influenced by the natural substrates and inhibitors of the enzyme. The cofactor is Mg(2+).

Its subcellular location is the cytoplasm. The catalysed reaction is 1-(5-phospho-beta-D-ribosyl)-ATP + diphosphate = 5-phospho-alpha-D-ribose 1-diphosphate + ATP. It participates in amino-acid biosynthesis; L-histidine biosynthesis; L-histidine from 5-phospho-alpha-D-ribose 1-diphosphate: step 1/9. With respect to regulation, feedback inhibited by histidine. Catalyzes the condensation of ATP and 5-phosphoribose 1-diphosphate to form N'-(5'-phosphoribosyl)-ATP (PR-ATP). Has a crucial role in the pathway because the rate of histidine biosynthesis seems to be controlled primarily by regulation of HisG enzymatic activity. This Blochmanniella floridana protein is ATP phosphoribosyltransferase.